Consider the following 433-residue polypeptide: D-amino acid dehydrogenase (433 aa).

3–17 (VLVLGSGVIGTASAY) provides a ligand contact to FAD.

The protein belongs to the DadA oxidoreductase family. FAD is required as a cofactor.

The enzyme catalyses a D-alpha-amino acid + A + H2O = a 2-oxocarboxylate + AH2 + NH4(+). Its pathway is amino-acid degradation; D-alanine degradation; NH(3) and pyruvate from D-alanine: step 1/1. Oxidative deamination of D-amino acids. This Pseudomonas putida (strain W619) protein is D-amino acid dehydrogenase.